Reading from the N-terminus, the 353-residue chain is Mitochondrial ubiquitin ligase activator of nfkb 1 (353 aa).

Over 1 to 8 the chain is Cytoplasmic; the sequence is MENGGRPS. The helical transmembrane segment at 9-29 threads the bilayer; that stretch reads VGQVILLTTSSAITALFYSIY. The Mitochondrial intermembrane portion of the chain corresponds to 30–239; the sequence is RHKYRSVQTL…LLEKQEVQMR (210 aa). Residues 240-260 form a helical membrane-spanning segment; it reads WWRILSIVFGVASCITLFFIL. The Cytoplasmic segment spans residues 261–353; it reads RRKYRHYKEK…IDRIVPLYNS (93 aa). An RING-type zinc finger spans residues 303 to 341; it reads CSICLSTEKSCVFLECGHVCSCISCYQALPSPKKCPICR.

In terms of assembly, homooligomer.

The protein localises to the mitochondrion outer membrane. The catalysed reaction is S-ubiquitinyl-[E2 ubiquitin-conjugating enzyme]-L-cysteine + [acceptor protein]-L-lysine = [E2 ubiquitin-conjugating enzyme]-L-cysteine + N(6)-ubiquitinyl-[acceptor protein]-L-lysine.. It participates in protein modification; protein ubiquitination. Functionally, E3 ubiquitin-protein ligase that plays a role in the control of mitochondrial morphology. Promotes mitochondrial fragmentation and influences mitochondrial localization. Inhibits cell growth. E3 ubiquitin ligases accept ubiquitin from an E2 ubiquitin-conjugating enzyme in the form of a thioester and then directly transfer the ubiquitin to targeted substrates. The chain is Mitochondrial ubiquitin ligase activator of nfkb 1 (mul1) from Xenopus laevis (African clawed frog).